The sequence spans 67 residues: Myrmicitoxin(1)-Pm6a (67 aa).

The N-terminal stretch at 1–25 (MRSLYLSFSLTIIFVLVIMHAEAKA) is a signal peptide. Positions 26–37 (ISEPNAIAEADP) are excised as a propeptide. A Valine amide modification is found at valine 66.

It belongs to the formicidae venom clade 3 family. In terms of tissue distribution, expressed by the venom gland.

The protein resides in the secreted. Toxin that causes a rapid and irreversible paralysis when intrathoracically injected into insects (blowflies). Does not cause spontaneous nocifensive behaviors by intraplantar injection in mice. Exhibits hemolytic and cytotoxic activities on HEK293 cells. The protein is Myrmicitoxin(1)-Pm6a of Pogonomyrmex maricopa (Maricopa harvester ant).